The following is a 90-amino-acid chain: Probable Fe(2+)-trafficking protein (90 aa).

This sequence belongs to the Fe(2+)-trafficking protein family.

In terms of biological role, could be a mediator in iron transactions between iron acquisition and iron-requiring processes, such as synthesis and/or repair of Fe-S clusters in biosynthetic enzymes. The protein is Probable Fe(2+)-trafficking protein of Aliivibrio fischeri (strain ATCC 700601 / ES114) (Vibrio fischeri).